Consider the following 471-residue polypeptide: MTASTATETLLHKGSGLQVVVGLGQSGLSVAHYLAEQGYQVAVTDNQENPALANKLPATIDIRQFGAIDAELLQQAARIIISPGISLDNVAIAAARAANIPVVSDIQLFCEACTVPIVAITGSNAKSTVTTLVGQMAADAGINVGVGGNIGVPALSLLSNKEMELAVIELSSFQLETVTNLGAQVATVLNMSPDHLDRHGDMLGYHQAKHRIFQGAKSVVINREDALTRPLVSDSLPRLSTGIHAPNKGHYGLITDTAGQTYLARGTERLISADKLKIKGRHNLLNAQAALALGELAGLPLEIMLITLQQFAGLEHRCQYVSTVAGIDYFNDSKGTNIGSTMAAVEGLGAVYAPKDGKLLLILGGQGKGQQFGELSPFINQYVSQVLFIGEDGKQIEQHLRAAGLSDEVSLHQCQTLENAFATIEQVTASSLSQVQAVLLSPACASFDQFDGFVARGEHFSQLVKQLDVVS.

122–128 (GSNAKST) is an ATP binding site.

Belongs to the MurCDEF family.

Its subcellular location is the cytoplasm. It carries out the reaction UDP-N-acetyl-alpha-D-muramoyl-L-alanine + D-glutamate + ATP = UDP-N-acetyl-alpha-D-muramoyl-L-alanyl-D-glutamate + ADP + phosphate + H(+). It functions in the pathway cell wall biogenesis; peptidoglycan biosynthesis. Its function is as follows. Cell wall formation. Catalyzes the addition of glutamate to the nucleotide precursor UDP-N-acetylmuramoyl-L-alanine (UMA). The polypeptide is UDP-N-acetylmuramoylalanine--D-glutamate ligase (Psychrobacter cryohalolentis (strain ATCC BAA-1226 / DSM 17306 / VKM B-2378 / K5)).